We begin with the raw amino-acid sequence, 341 residues long: Glycerol-3-phosphate dehydrogenase [NAD(P)+] (341 aa).

NADPH contacts are provided by Ser13, Trp14, and Lys108. Sn-glycerol 3-phosphate-binding residues include Lys108, Gly139, and Ser141. Residue Ala143 participates in NADPH binding. Positions 194, 247, 257, 258, and 259 each coordinate sn-glycerol 3-phosphate. Lys194 acts as the Proton acceptor in catalysis. Arg258 lines the NADPH pocket. Residues Val282 and Glu284 each coordinate NADPH.

It belongs to the NAD-dependent glycerol-3-phosphate dehydrogenase family.

It is found in the cytoplasm. The catalysed reaction is sn-glycerol 3-phosphate + NAD(+) = dihydroxyacetone phosphate + NADH + H(+). It catalyses the reaction sn-glycerol 3-phosphate + NADP(+) = dihydroxyacetone phosphate + NADPH + H(+). Its pathway is membrane lipid metabolism; glycerophospholipid metabolism. Its function is as follows. Catalyzes the reduction of the glycolytic intermediate dihydroxyacetone phosphate (DHAP) to sn-glycerol 3-phosphate (G3P), the key precursor for phospholipid synthesis. The polypeptide is Glycerol-3-phosphate dehydrogenase [NAD(P)+] (Lactococcus lactis subsp. lactis (strain IL1403) (Streptococcus lactis)).